The chain runs to 92 residues: Small ribosomal subunit protein uS19c (92 aa).

This sequence belongs to the universal ribosomal protein uS19 family.

It is found in the plastid. The protein resides in the chloroplast. Protein S19 forms a complex with S13 that binds strongly to the 16S ribosomal RNA. The sequence is that of Small ribosomal subunit protein uS19c (rps19) from Glycine max (Soybean).